We begin with the raw amino-acid sequence, 563 residues long: Arginine--tRNA ligase (563 aa).

The 'HIGH' region motif lies at 122 to 132 (PNIAKPISMGH).

This sequence belongs to the class-I aminoacyl-tRNA synthetase family. Monomer.

It localises to the cytoplasm. It catalyses the reaction tRNA(Arg) + L-arginine + ATP = L-arginyl-tRNA(Arg) + AMP + diphosphate. This Latilactobacillus sakei subsp. sakei (strain 23K) (Lactobacillus sakei subsp. sakei) protein is Arginine--tRNA ligase.